Reading from the N-terminus, the 475-residue chain is tRNA modification GTPase MnmE (475 aa).

(6S)-5-formyl-5,6,7,8-tetrahydrofolate is bound by residues Arg-24, Glu-81, and Lys-124. Residues 220-397 (GLSVVLAGQP…LRRELLRLVG (178 aa)) enclose the TrmE-type G domain. A K(+)-binding site is contributed by Asn-230. Residues 230-235 (NVGKSS), 249-255 (TPIAGTT), 274-277 (DTAG), and 378-380 (SAR) contribute to the GTP site. Mg(2+) is bound at residue Ser-234. The K(+) site is built by Thr-249, Ile-251, and Thr-254. Position 255 (Thr-255) interacts with Mg(2+). Lys-475 provides a ligand contact to (6S)-5-formyl-5,6,7,8-tetrahydrofolate.

This sequence belongs to the TRAFAC class TrmE-Era-EngA-EngB-Septin-like GTPase superfamily. TrmE GTPase family. Homodimer. Heterotetramer of two MnmE and two MnmG subunits. K(+) serves as cofactor.

It is found in the cytoplasm. Functionally, exhibits a very high intrinsic GTPase hydrolysis rate. Involved in the addition of a carboxymethylaminomethyl (cmnm) group at the wobble position (U34) of certain tRNAs, forming tRNA-cmnm(5)s(2)U34. The sequence is that of tRNA modification GTPase MnmE from Cupriavidus necator (strain ATCC 17699 / DSM 428 / KCTC 22496 / NCIMB 10442 / H16 / Stanier 337) (Ralstonia eutropha).